The primary structure comprises 412 residues: DNA utilization protein HofQ (412 aa).

The signal sequence occupies residues 1–18 (MKQWIAALLLMLIPGVQA).

It belongs to the bacterial secretin family. PilQ subfamily.

The protein resides in the cell outer membrane. Functionally, required for the use of extracellular DNA as a nutrient. Could be the porin responsible for transport of DNA across the outer membrane. This is DNA utilization protein HofQ (hofQ) from Escherichia coli (strain K12).